Reading from the N-terminus, the 82-residue chain is UPF0213 protein SH2523 (82 aa).

The GIY-YIG domain occupies 2–77 (AKHYVYIVKC…KTFSRQQKLK (76 aa)).

Belongs to the UPF0213 family.

The chain is UPF0213 protein SH2523 from Staphylococcus haemolyticus (strain JCSC1435).